A 341-amino-acid polypeptide reads, in one-letter code: Spindolin (341 aa).

The N-terminal stretch at 1–20 (MNKLILISLIASLYQVEVDA) is a signal peptide.

Homodimer; disulfide-linked.

Its function is as follows. This protein is a spindle body protein. The chain is Spindolin (SPH) from Choristoneura biennis entomopoxvirus (CbEPV).